The sequence spans 137 residues: Large ribosomal subunit protein uL16c (137 aa).

Residues 1 to 21 (MLSPKKTKYRKQHRGRMKGKA) form a disordered region.

This sequence belongs to the universal ribosomal protein uL16 family. Part of the 50S ribosomal subunit.

The protein localises to the plastid. It is found in the chloroplast. The sequence is that of Large ribosomal subunit protein uL16c from Oedogonium cardiacum (Filamentous green alga).